Here is a 269-residue protein sequence, read N- to C-terminus: Regulatory protein RecX (269 aa).

Belongs to the RecX family.

It localises to the cytoplasm. Functionally, modulates RecA activity. In Listeria welshimeri serovar 6b (strain ATCC 35897 / DSM 20650 / CCUG 15529 / CIP 8149 / NCTC 11857 / SLCC 5334 / V8), this protein is Regulatory protein RecX.